A 408-amino-acid chain; its full sequence is Argininosuccinate synthase (408 aa).

ATP is bound by residues 16–24 (AYSGGLDTS) and A44. 2 residues coordinate L-citrulline: Y96 and S101. G126 provides a ligand contact to ATP. L-aspartate-binding residues include T128, N132, and D133. N132 provides a ligand contact to L-citrulline. L-citrulline-binding residues include R136, S185, S194, E270, and Y282.

It belongs to the argininosuccinate synthase family. Type 1 subfamily. Homotetramer.

It localises to the cytoplasm. The catalysed reaction is L-citrulline + L-aspartate + ATP = 2-(N(omega)-L-arginino)succinate + AMP + diphosphate + H(+). Its pathway is amino-acid biosynthesis; L-arginine biosynthesis; L-arginine from L-ornithine and carbamoyl phosphate: step 2/3. The sequence is that of Argininosuccinate synthase from Shewanella woodyi (strain ATCC 51908 / MS32).